Here is a 256-residue protein sequence, read N- to C-terminus: 6-phosphogluconolactonase (256 aa).

The protein belongs to the glucosamine/galactosamine-6-phosphate isomerase family. 6-phosphogluconolactonase subfamily.

The catalysed reaction is 6-phospho-D-glucono-1,5-lactone + H2O = 6-phospho-D-gluconate + H(+). The protein operates within carbohydrate degradation; pentose phosphate pathway; D-ribulose 5-phosphate from D-glucose 6-phosphate (oxidative stage): step 2/3. Its function is as follows. Hydrolysis of 6-phosphogluconolactone to 6-phosphogluconate. The polypeptide is 6-phosphogluconolactonase (pgl) (Chlamydia trachomatis serovar D (strain ATCC VR-885 / DSM 19411 / UW-3/Cx)).